The primary structure comprises 87 residues: Small ribosomal subunit protein bS20 (87 aa).

The disordered stretch occupies residues Met-1–Ser-26.

This sequence belongs to the bacterial ribosomal protein bS20 family.

In terms of biological role, binds directly to 16S ribosomal RNA. The protein is Small ribosomal subunit protein bS20 of Enterobacter sp. (strain 638).